The following is a 515-amino-acid chain: Maturase K (515 aa).

Belongs to the intron maturase 2 family. MatK subfamily.

The protein resides in the plastid. The protein localises to the chloroplast. Usually encoded in the trnK tRNA gene intron. Probably assists in splicing its own and other chloroplast group II introns. The chain is Maturase K from Picea mariana (Black spruce).